A 2586-amino-acid polypeptide reads, in one-letter code: Highly reducing polyketide synthase FUM1 (2586 aa).

Positions 29 to 451 constitute a Ketosynthase family 3 (KS3) domain; the sequence is VLPVAIVGMG…GANAHCIIET (423 aa). Catalysis depends on for beta-ketoacyl synthase activity residues C201, H336, and H374. A malonyl-CoA:ACP transacylase (MAT) domain region spans residues 609–928; sequence IFTGQGAQWV…TESLLKLAGE (320 aa). Residues 980–1111 form an N-terminal hotdog fold region; it reads HELLGSRTLE…GQVRPGQDAH (132 aa). The interval 980 to 1269 is dehydratase (DH) domain; that stretch reads HELLGSRTLE…LEDGKFSPLE (290 aa). The 295-residue stretch at 980-1274 folds into the PKS/mFAS DH domain; the sequence is HELLGSRTLE…FSPLEMDLAE (295 aa). H1012 (proton acceptor; for dehydratase activity) is an active-site residue. Residues 1125–1274 form a C-terminal hotdog fold region; that stretch reads QHYPRLVDNL…FSPLEMDLAE (150 aa). Catalysis depends on D1186, which acts as the Proton donor; for dehydratase activity. The segment at 1450-1627 is methyltransferase (CMet) domain; sequence DFFATAGHTR…GFSGVDSAIY (178 aa). Residues 1862-2172 form an enoyl reductase (ER) (ER) domain region; that stretch reads GLLQTLGWVP…KGVHLGKIVV (311 aa). Positions 2197-2373 are ketoreductase (KR) domain; sequence ASYLLVGGLG…ASVLQIGLIE (177 aa). The Carrier domain occupies 2486 to 2565; it reads PATVELVTNE…GLARLTVDGL (80 aa). O-(pantetheine 4'-phosphoryl)serine is present on S2524.

It participates in mycotoxin biosynthesis. Its function is as follows. Highly reducing polyketide synthase; part of the gene cluster that mediates the biosynthesis of fumonisins B1 (FB1), B2 (FB2), B3 (FB3), and B4 (FB4), which are carcinogenic mycotoxins. The biosynthesis starts with the FUM1-catalyzed carbon chain assembly from one molecule of acetyl-CoA, eight molecules of malonyl-CoA, and two molecules of methionine (in S-adenosyl form). The C18 polyketide chain is released from the enzyme by a nucleophilic attack of a carbanion, which is derived from R-carbon of alanine by decarboxylation, on the carbonyl carbon of polyketide acyl chain. This step is catalyzed by the pyridoxal 5'-phosphate-dependent aminoacyl transferase FUM8. The resultant 3-keto intermediate is then stereospecifically reduced to a 3-hydroxyl product by reductase FUM13. Subsequent oxidations at C-10 by the cytochrome P450 monooxygenase FUM2, C-14 and C-15 by FUM6, FUM12 or FUM15, tricarballylic esterification of the hydroxyl groups on C-14 and C-15 by acyltransferase FUM14, and C-5 hydroxylation by 2-keto-glutarate-dependent dioxygenase FUM3 furnish the biosynthesis of fumonisins. The tricarballylic moieties are most likely derived from the citric acid cycle, and their addition to the carbon backbone may involve FUM7, FUM10, FUM11 and FUM14. The polypeptide is Highly reducing polyketide synthase FUM1 (Gibberella moniliformis (strain M3125 / FGSC 7600) (Maize ear and stalk rot fungus)).